The chain runs to 297 residues: Calponin-1 (297 aa).

The region spanning 28-131 is the Calponin-homology (CH) domain; sequence HQREQELREW…STLLALASMA (104 aa). Calponin-like repeat units lie at residues 164–189, 204–229, and 243–268; these read IGLQ…RHLY, ISLQ…RQIF, and VSLQ…RQVY. Thr170 bears the Phosphothreonine; by ROCK2 mark. Phosphoserine; by ROCK2 is present on Ser175. Phosphothreonine; by ROCK2 is present on residues Thr180 and Thr184. Thr259 carries the phosphothreonine; by ROCK2 modification.

This sequence belongs to the calponin family. Part of cGMP kinase signaling complex at least composed of ACTA2/alpha-actin, CNN1/calponin H1, PLN/phospholamban, PRKG1 and ITPR1. In terms of tissue distribution, smooth muscle, and tissues containing significant amounts of smooth muscle.

Functionally, thin filament-associated protein that is implicated in the regulation and modulation of smooth muscle contraction. It is capable of binding to actin, calmodulin and tropomyosin. The interaction of calponin with actin inhibits the actomyosin Mg-ATPase activity. This is Calponin-1 (Cnn1) from Mus musculus (Mouse).